Consider the following 107-residue polypeptide: SOSS complex subunit C (107 aa).

Belongs to the SOSS-C family. As to quaternary structure, belongs to the multiprotein complex Integrator. Component of the SOSS complex, composed of soss-b (soss-b1/nabp2 or soss-b2/nabp1), soss-a/ints3 and soss-c/inip.

Its subcellular location is the nucleus. Component of the SOSS complex, a multiprotein complex that functions downstream of the MRN complex to promote DNA repair and G2/M checkpoint. The SOSS complex associates with single-stranded DNA at DNA lesions and influences diverse endpoints in the cellular DNA damage response including cell-cycle checkpoint activation, recombinational repair and maintenance of genomic stability. Required for efficient homologous recombination-dependent repair of double-strand breaks (DSBs). The polypeptide is SOSS complex subunit C (inip) (Salmo salar (Atlantic salmon)).